The chain runs to 121 residues: Large ribosomal subunit protein bL12 (121 aa).

This sequence belongs to the bacterial ribosomal protein bL12 family. Homodimer. Part of the ribosomal stalk of the 50S ribosomal subunit. Forms a multimeric L10(L12)X complex, where L10 forms an elongated spine to which 2 to 4 L12 dimers bind in a sequential fashion. Binds GTP-bound translation factors.

Forms part of the ribosomal stalk which helps the ribosome interact with GTP-bound translation factors. Is thus essential for accurate translation. This chain is Large ribosomal subunit protein bL12, found in Pseudomonas syringae pv. tomato (strain ATCC BAA-871 / DC3000).